We begin with the raw amino-acid sequence, 335 residues long: Casein kinase I (335 aa).

The Protein kinase domain maps to 9–278 (YRLGRKIGSG…LRRLFKDLFF (270 aa)). Residues 15-23 (IGSGSFGDI) and lysine 38 each bind ATP. The active-site Proton acceptor is the aspartate 128. The interval 304–335 (RSMVNQGAESGNQWRRDASGRDPLGRLPQLEP) is disordered. A compositionally biased stretch (polar residues) spans 305–316 (SMVNQGAESGNQ). The span at 317-327 (WRRDASGRDPL) shows a compositional bias: basic and acidic residues.

This sequence belongs to the protein kinase superfamily. CK1 Ser/Thr protein kinase family. Casein kinase I subfamily.

It catalyses the reaction L-seryl-[protein] + ATP = O-phospho-L-seryl-[protein] + ADP + H(+). It carries out the reaction L-threonyl-[protein] + ATP = O-phospho-L-threonyl-[protein] + ADP + H(+). Its function is as follows. Casein kinases are operationally defined by their preferential utilization of acidic proteins such as caseins as substrates. It can phosphorylate a large number of proteins. This is Casein kinase I from Eimeria tenella (Coccidian parasite).